The primary structure comprises 273 residues: Cell wall mannoprotein 1 (273 aa).

Residues 1–17 form the signal peptide; the sequence is MRFSAIFTLGLAGTALA. The tract at residues 173–247 is disordered; sequence DVSDSAPSSS…GSASATSPPL (75 aa). The span at 177–247 shows a compositional bias: low complexity; sequence SAPSSSAGSS…GSASATSPPL (71 aa).

It belongs to the cell wall mannoprotein 1 family. Post-translationally, galactomannoprotein, glycosylated.

The protein localises to the secreted. It localises to the cell wall. In terms of biological role, constitutive protein of the cell wall. Antigen target of host humoral immune response. The sequence is that of Cell wall mannoprotein 1 from Aspergillus flavus.